The following is a 207-amino-acid chain: Small ribosomal subunit protein uS4c (207 aa).

In terms of domain architecture, S4 RNA-binding spans 92–155 (MRLDNILFRL…TYQSILSKRI (64 aa)).

It belongs to the universal ribosomal protein uS4 family. In terms of assembly, part of the 30S ribosomal subunit. Contacts protein S5. The interaction surface between S4 and S5 is involved in control of translational fidelity.

It localises to the plastid. The protein resides in the chloroplast. Functionally, one of the primary rRNA binding proteins, it binds directly to 16S rRNA where it nucleates assembly of the body of the 30S subunit. In terms of biological role, with S5 and S12 plays an important role in translational accuracy. This Equisetum giganteum (Giant horsetail) protein is Small ribosomal subunit protein uS4c (rps4).